The sequence spans 288 residues: Store-operated calcium entry regulator STIMATE (288 aa).

At 1–28 (MQGPGGNVSRGLPGGPASTVASGAGRCE) the chain is on the cytoplasmic side. Helical transmembrane passes span 29-49 (SGALMHSFGIFLQGLLGVVAF), 69-89 (IWFLDTSKQAIGMLFIHFANV), and 102-122 (LYLINFLLDATVGMLLIYVGV). The GXXXG motif motif lies at 149-153 (GAWVG). Transmembrane regions (helical) follow at residues 156-176 (ALYIVIMIFEKSVVFIVLLIL) and 194-214 (LAIVMLIVPFFVNAFMFWVVD). Over 215–288 (NFLMRKGKTK…KKKHRFGLPV (74 aa)) the chain is Cytoplasmic. The segment at 228 to 288 (EERGANQDSR…KKKHRFGLPV (61 aa)) is disordered. The tract at residues 241-246 (KVRYRR) is required for localization in the endoplasmic reticulum. Over residues 261–272 (ADDEMEESDAEE) the composition is skewed to acidic residues. Residues 277 to 288 (PVKKKHRFGLPV) show a composition bias toward basic residues.

The protein belongs to the STIMATE family. Homooligomer. Interacts with STIM1.

The protein resides in the endoplasmic reticulum membrane. Acts as a regulator of store-operated Ca(2+) entry (SOCE) at junctional sites that connect the endoplasmic reticulum (ER) and plasma membrane (PM), called ER-plasma membrane (ER-PM) junction or cortical ER. SOCE is a Ca(2+) influx following depletion of intracellular Ca(2+) stores. Acts by interacting with STIM1, promoting STIM1 conformational switch. Involved in STIM1 relocalization to ER-PM junctions. Contributes to the maintenance and reorganization of store-dependent ER-PM junctions. The polypeptide is Store-operated calcium entry regulator STIMATE (Rattus norvegicus (Rat)).